The chain runs to 600 residues: MNNQKYIRNFSIIAHIDHGKSTLADRLIEYCGGLNAREMSQQVLDSMDIERERGITIKAQTVRLVYKAKNGNTYYLNLMDTPGHVDFAYEVSRSLAACEGSLLVVDSTQGVEAQTLANVYQAIANDHLIVPVLNKIDLAASEPDYVKTQIEDIIGIDASEAVLISAKNGIGIDSVLEAIINKLPAPKESSTDILKALLVDSWYDPYLGVVILVRIIDGALRKNMRVKMMRTNSVYTVEHVGFFTPKKHISDVLYAGEIGFFTASIKRVSDCKVGDTITDEKKSCEQALPGFKPNIPVVFCGFYPTDSAEFEHLKDSLAKLRLNDASFEYEMESSSALGVGFRCGFLGLLHLEIIQERLSREFDLDLITTAPSVIYKINMLDGQNLEIHNPADLPDLQKIASMEEPWIKATIIVPDEFIGTVLSLCTEKRGIQLDHSYISNRAKIVYKLPLNEIVYDFYDRLKSCSKGYASFEWQMDVYELSDLVNLRILVNGEVVDALSTIVHRSRAEQRGRALCIRLKDLIPRQQIDIAIQASVGSRIIARETIKALRKDVLSKCYGGDISRKRKLLEKQKAGKKKMRQYGNIEIPQSAFIAALQIGGE.

A tr-type G domain is found at 5–187; the sequence is KYIRNFSIIA…AIINKLPAPK (183 aa). GTP-binding positions include 17-22 and 134-137; these read DHGKST and NKID.

This sequence belongs to the TRAFAC class translation factor GTPase superfamily. Classic translation factor GTPase family. LepA subfamily.

It is found in the cell inner membrane. It carries out the reaction GTP + H2O = GDP + phosphate + H(+). Required for accurate and efficient protein synthesis under certain stress conditions. May act as a fidelity factor of the translation reaction, by catalyzing a one-codon backward translocation of tRNAs on improperly translocated ribosomes. Back-translocation proceeds from a post-translocation (POST) complex to a pre-translocation (PRE) complex, thus giving elongation factor G a second chance to translocate the tRNAs correctly. Binds to ribosomes in a GTP-dependent manner. The sequence is that of Elongation factor 4 from Rickettsia prowazekii (strain Madrid E).